A 460-amino-acid polypeptide reads, in one-letter code: Cytochrome P450 CYP71D312 (460 aa).

Cys-398 lines the heme pocket.

This sequence belongs to the cytochrome P450 family. Requires heme as cofactor.

Functionally, probable heme-thiolate monooxygenase. The chain is Cytochrome P450 CYP71D312 from Panax ginseng (Korean ginseng).